The sequence spans 133 residues: Nickel-responsive regulator (133 aa).

Ni(2+) is bound by residues histidine 76, histidine 87, histidine 89, and cysteine 95.

This sequence belongs to the transcriptional regulatory CopG/NikR family. In terms of assembly, homotetramer. The cofactor is Ni(2+).

Functionally, transcriptional repressor of the nikABCDE operon. Is active in the presence of excessive concentrations of intracellular nickel. This chain is Nickel-responsive regulator, found in Shigella dysenteriae serotype 1 (strain Sd197).